The primary structure comprises 221 residues: Very-long-chain (3R)-3-hydroxyacyl-CoA dehydratase PASTICCINO 2A (221 aa).

The Cytoplasmic segment spans residues 1-11; it reads MAGVGSAVRRL. A helical transmembrane segment spans residues 12–32; sequence YLSVYNWAVFFGWAQVLYYAV. The Lumenal portion of the chain corresponds to 33–51; it reads TTLLESGHEAVYAAVERPL. Residues 52–70 traverse the membrane as a helical segment; sequence QFAQTAAFLEILHGLVGLV. Residues 71–76 lie on the Cytoplasmic side of the membrane; sequence RSPVSA. Residues 77–95 form a helical membrane-spanning segment; it reads TLPQIGSRLFLTWGILWSF. At 96–100 the chain is on the lumenal side; it reads PETHS. A helical transmembrane segment spans residues 101 to 121; it reads HILVTSLVISWSITEIIRYSF. The Cytoplasmic segment spans residues 122-141; that stretch reads FGMKEAFGFAPSWLLWLRYS. The helical transmembrane segment at 142–165 threads the bilayer; it reads TFMVLYPTGISSEVGLIYIALPYM. Residues Y147 and E154 contribute to the active site. Residues 166 to 184 are Lumenal-facing; sequence KASEKYCLRMPNKWNFSFD. The chain crosses the membrane as a helical span at residues 185–209; sequence FFYASILSLAIYVPGSPHMFTYMLA. Topologically, residues 210–221 are cytoplasmic; that stretch reads QRKKALAKAKAA.

Belongs to the very long-chain fatty acids dehydratase HACD family.

It is found in the endoplasmic reticulum membrane. It carries out the reaction a very-long-chain (3R)-3-hydroxyacyl-CoA = a very-long-chain (2E)-enoyl-CoA + H2O. It participates in lipid metabolism; fatty acid biosynthesis. Its function is as follows. Catalyzes the third of the four reactions of the long-chain fatty acids elongation cycle. This endoplasmic reticulum-bound enzymatic process, allows the addition of two carbons to the chain of long- and very long-chain fatty acids/VLCFAs per cycle. This enzyme catalyzes the dehydration of the 3-hydroxyacyl-CoA intermediate into trans-2,3-enoyl-CoA, within each cycle of fatty acid elongation. Thereby, it participates in the production of VLCFAs of different chain lengths that are involved in multiple biological processes as precursors of membrane lipids and lipid mediators. May be an anti-phosphatase that prevents CDKA-1 dephosphorylation and activation. Involved in the hormonal control of cell division and differentiation. Required for proliferation control of meristematic and non-meristematic cells. Negative regulator of the cell cycle. This chain is Very-long-chain (3R)-3-hydroxyacyl-CoA dehydratase PASTICCINO 2A (PAS2A), found in Oryza sativa subsp. japonica (Rice).